A 197-amino-acid polypeptide reads, in one-letter code: Large ribosomal subunit protein eL15 (197 aa).

3 stretches are compositionally biased toward basic residues: residues 70 to 90 (PKGG…RMGK), 163 to 179 (RGKT…RKRG), and 187 to 197 (PSLRAHRRRGK). Disordered stretches follow at residues 70–99 (PKGG…GKSK) and 163–197 (RGKT…RRGK).

Belongs to the eukaryotic ribosomal protein eL15 family.

This is Large ribosomal subunit protein eL15 from Methanopyrus kandleri (strain AV19 / DSM 6324 / JCM 9639 / NBRC 100938).